The primary structure comprises 222 residues: Thiamine-phosphate synthase (222 aa).

4-amino-2-methyl-5-(diphosphooxymethyl)pyrimidine contacts are provided by residues 44–48 (QVRMK) and asparagine 75. 2 residues coordinate Mg(2+): aspartate 76 and aspartate 95. Threonine 114 provides a ligand contact to 4-amino-2-methyl-5-(diphosphooxymethyl)pyrimidine. 140 to 142 (SRS) lines the 2-[(2R,5Z)-2-carboxy-4-methylthiazol-5(2H)-ylidene]ethyl phosphate pocket. Lysine 143 provides a ligand contact to 4-amino-2-methyl-5-(diphosphooxymethyl)pyrimidine. Residue glycine 171 coordinates 2-[(2R,5Z)-2-carboxy-4-methylthiazol-5(2H)-ylidene]ethyl phosphate.

Belongs to the thiamine-phosphate synthase family. The cofactor is Mg(2+).

It carries out the reaction 2-[(2R,5Z)-2-carboxy-4-methylthiazol-5(2H)-ylidene]ethyl phosphate + 4-amino-2-methyl-5-(diphosphooxymethyl)pyrimidine + 2 H(+) = thiamine phosphate + CO2 + diphosphate. The enzyme catalyses 2-(2-carboxy-4-methylthiazol-5-yl)ethyl phosphate + 4-amino-2-methyl-5-(diphosphooxymethyl)pyrimidine + 2 H(+) = thiamine phosphate + CO2 + diphosphate. It catalyses the reaction 4-methyl-5-(2-phosphooxyethyl)-thiazole + 4-amino-2-methyl-5-(diphosphooxymethyl)pyrimidine + H(+) = thiamine phosphate + diphosphate. It participates in cofactor biosynthesis; thiamine diphosphate biosynthesis; thiamine phosphate from 4-amino-2-methyl-5-diphosphomethylpyrimidine and 4-methyl-5-(2-phosphoethyl)-thiazole: step 1/1. Its function is as follows. Condenses 4-methyl-5-(beta-hydroxyethyl)thiazole monophosphate (THZ-P) and 2-methyl-4-amino-5-hydroxymethyl pyrimidine pyrophosphate (HMP-PP) to form thiamine monophosphate (TMP). In Anaeromyxobacter dehalogenans (strain 2CP-C), this protein is Thiamine-phosphate synthase.